A 153-amino-acid polypeptide reads, in one-letter code: Myoglobin (153 aa).

Residues 2 to 147 (GLNDQEWQQV…FRNDMASKYK (146 aa)) enclose the Globin domain. Residue His65 coordinates nitrite. His65 provides a ligand contact to O2. Heme b is bound at residue His93.

The protein belongs to the globin family. In terms of assembly, monomeric.

The protein localises to the cytoplasm. Its subcellular location is the sarcoplasm. The catalysed reaction is Fe(III)-heme b-[protein] + nitric oxide + H2O = Fe(II)-heme b-[protein] + nitrite + 2 H(+). The enzyme catalyses H2O2 + AH2 = A + 2 H2O. Monomeric heme protein which primary function is to store oxygen and facilitate its diffusion within muscle tissues. Reversibly binds oxygen through a pentacoordinated heme iron and enables its timely and efficient release as needed during periods of heightened demand. Depending on the oxidative conditions of tissues and cells, and in addition to its ability to bind oxygen, it also has a nitrite reductase activity whereby it regulates the production of bioactive nitric oxide. Under stress conditions, like hypoxia and anoxia, it also protects cells against reactive oxygen species thanks to its pseudoperoxidase activity. The sequence is that of Myoglobin (MB) from Aptenodytes forsteri (Emperor penguin).